Here is a 409-residue protein sequence, read N- to C-terminus: tRNA(Met) cytidine acetate ligase (409 aa).

ATP contacts are provided by residues 7–20 (VVEY…HLYH), glycine 102, asparagine 169, and arginine 194.

It belongs to the TmcAL family.

The protein localises to the cytoplasm. It catalyses the reaction cytidine(34) in elongator tRNA(Met) + acetate + ATP = N(4)-acetylcytidine(34) in elongator tRNA(Met) + AMP + diphosphate. In terms of biological role, catalyzes the formation of N(4)-acetylcytidine (ac(4)C) at the wobble position of elongator tRNA(Met), using acetate and ATP as substrates. First activates an acetate ion to form acetyladenylate (Ac-AMP) and then transfers the acetyl group to tRNA to form ac(4)C34. The polypeptide is tRNA(Met) cytidine acetate ligase (Clostridium botulinum (strain Okra / Type B1)).